The sequence spans 419 residues: MDKFRVQGPGRLSGEVTISGAKNAALPILFAALLAEEPVEIQNVPKLKDIDTTMKLLSQLGTKVERNGSVWIDASQVNIFCAPYELVKTMRASIWALGPLVARFGQGQVSLPGGCAIGARPVDLHITGLEQLGAEIKLEEGYVKASVQGRLKGAHIVMDKVSVGATVTIMSAATLAEGTTVIENAAREPEIVDTANFLNTLGAKITGQGTDKITIEGVERLGGGVYRVLPDRIETGTFLVAAAISGGKVMCRNTRPDTLDAVLAKLREAGADIETGEDWISLDMHGKRPKAVNVRTAPHPAFPTDMQAQFTLLNLVAEGTGVITETIFENRFMHVPELIRMGAHAEIESNTVICHGVEKLSGAQVMATDLRASASLVLAGCIAEGTTVVDRIYHIDRGYEGIEDKLRALGANIERIKGE.

Position 22-23 (Lys-22–Asn-23) interacts with phosphoenolpyruvate. Arg-91 lines the UDP-N-acetyl-alpha-D-glucosamine pocket. The active-site Proton donor is Cys-115. At Cys-115 the chain carries 2-(S-cysteinyl)pyruvic acid O-phosphothioketal. UDP-N-acetyl-alpha-D-glucosamine is bound by residues Arg-120–Leu-124, Lys-160–Val-163, Asp-305, and Ile-327.

It belongs to the EPSP synthase family. MurA subfamily.

It is found in the cytoplasm. It catalyses the reaction phosphoenolpyruvate + UDP-N-acetyl-alpha-D-glucosamine = UDP-N-acetyl-3-O-(1-carboxyvinyl)-alpha-D-glucosamine + phosphate. It functions in the pathway cell wall biogenesis; peptidoglycan biosynthesis. In terms of biological role, cell wall formation. Adds enolpyruvyl to UDP-N-acetylglucosamine. This Cronobacter sakazakii (strain ATCC BAA-894) (Enterobacter sakazakii) protein is UDP-N-acetylglucosamine 1-carboxyvinyltransferase.